Reading from the N-terminus, the 201-residue chain is Endoribonuclease YbeY (201 aa).

Zn(2+) is bound by residues His-120, His-124, and His-130. Residues 151-201 (DGADGADGADGARGAADGAADGGEGRRGDQGRRGDQGRGGGAGEPPAAPAR) are disordered. Positions 173-186 (GEGRRGDQGRRGDQ) are enriched in basic and acidic residues.

The protein belongs to the endoribonuclease YbeY family. Zn(2+) is required as a cofactor.

The protein resides in the cytoplasm. Single strand-specific metallo-endoribonuclease involved in late-stage 70S ribosome quality control and in maturation of the 3' terminus of the 16S rRNA. The protein is Endoribonuclease YbeY of Frankia casuarinae (strain DSM 45818 / CECT 9043 / HFP020203 / CcI3).